The following is a 507-amino-acid chain: Arabinose import ATP-binding protein AraG (507 aa).

2 consecutive ABC transporter domains span residues 14–249 (LRFN…MVGR) and 249–505 (RDIQ…LPRT). 46 to 53 (GENGAGKS) lines the ATP pocket.

This sequence belongs to the ABC transporter superfamily. Arabinose importer (TC 3.A.1.2.2) family. In terms of assembly, the complex is composed of two ATP-binding proteins (AraG), two transmembrane proteins (AraH) and a solute-binding protein (AraF).

It localises to the cell inner membrane. The enzyme catalyses L-arabinose(out) + ATP + H2O = L-arabinose(in) + ADP + phosphate + H(+). Part of the ABC transporter complex AraFGH involved in arabinose import. Responsible for energy coupling to the transport system. The polypeptide is Arabinose import ATP-binding protein AraG (Pseudomonas syringae pv. tomato (strain ATCC BAA-871 / DC3000)).